A 153-amino-acid chain; its full sequence is Transcriptional repressor NrdR (153 aa).

The segment at 3–34 (CPFCNSTDTQVKDSRSIENDMLIRRRRVCLVC) is a zinc-finger region. The 91-residue stretch at 49 to 139 (FMVVKKNGET…VYMNFRNIND (91 aa)) folds into the ATP-cone domain.

It belongs to the NrdR family. Zn(2+) is required as a cofactor.

Functionally, negatively regulates transcription of bacterial ribonucleotide reductase nrd genes and operons by binding to NrdR-boxes. This chain is Transcriptional repressor NrdR, found in Ehrlichia chaffeensis (strain ATCC CRL-10679 / Arkansas).